The chain runs to 494 residues: DEAD-box ATP-dependent RNA helicase CshA (494 aa).

The short motif at 3–31 (ITFQDFNLSSDLMKAINRMGFEEATPIQA) is the Q motif element. Residues 34-204 (IPLGLSNKDV…ERFMTEPEHV (171 aa)) enclose the Helicase ATP-binding domain. 47-54 (AQTGTGKT) serves as a coordination point for ATP. Positions 152–155 (DEAD) match the DEAD box motif. The Helicase C-terminal domain occupies 215-375 (NIQQFYLEVQ…RMKEPTLDEA (161 aa)). Residues 413–494 (VTVVAAAIKM…SGDRRQKKSY (82 aa)) form a required for dimerization or oligomerization region. The interval 429 to 494 (DTPVRLTDEA…SGDRRQKKSY (66 aa)) is disordered. A compositionally biased stretch (basic residues) spans 443 to 452 (KRYKNQRSSK). The span at 473–488 (SYDKKRSNDRRSSGDR) shows a compositional bias: basic and acidic residues.

Belongs to the DEAD box helicase family. CshA subfamily. In terms of assembly, homodimer or oligomer. May interact with RNA helicases CshB and DbpA (DeaD). Probably a component of the RNA degradosome complex composed of rny, rnjA, rnjB, pnp, pfkA and eno, and possibly also rnpA (although rnjA and rnjB's presence is unclear). Interacts with ribosomal proteins L1 and L3 (rplA and rplC) and the protein component of RNase RnpA. Interacts with the RNA polymerase core. Mg(2+) is required as a cofactor.

The protein localises to the cytoplasm. Its subcellular location is the nucleoid. It localises to the cell membrane. It catalyses the reaction ATP + H2O = ADP + phosphate + H(+). Its activity is regulated as follows. RNA helicase activity is inhibited by EDTA. The most abundant DEAD-box RNA helicase. An ATP-dependent RNA helicase with RNA-dependent ATPase activity. May work in conjunction with the cold shock proteins to ensure proper initiation of transcription at low and optimal temperatures. In vitro, unwinds dsRNA in both 5'- and 3'- directions. Plays a role in ribosomal 50S subunit assembly. Its deletion leads to changes in mRNA levels for over 200 transcripts. The chain is DEAD-box ATP-dependent RNA helicase CshA from Bacillus subtilis (strain 168).